A 440-amino-acid chain; its full sequence is MGTKLSSRSPFSLPFLTLLAGMAIAQQPAHSGVETIDHIVAVVNENVITRHELDEMLGAMLKQLQKQGVQPPPPAVLEKQLLERIILNRVQLQLANETGLTVSDAELDQTLRRIAQENKMSLQEFDRALAEDGVSFSKFRDEIRDEIILVRLKEREVSNRVSVTEGEVDHFLETQEDSPSQSDEYRIAHILIQVSEGADPLKRDAARQRAESALAKLKAGTEFAQVAAEFSDAPDAMEGGLLNWRPAAQLTKKFAEILTPMKPGEITGIIPSPNGFHILKLVERRNQDTVTTMIDQTHARHILIKISELTSEADAHRRVTELKERLDNGSKFEELAKLHSEDASAPTGGDLGWISPGDTVPEFEQAMSALKPGEISSPVQSPFGWHLIQVIERRTQDVSQERKRQSARQAIRARKAETAFQEWLQRLRDRAYVEYRLEEG.

Positions 1–25 (MGTKLSSRSPFSLPFLTLLAGMAIA) are cleaved as a signal peptide. PpiC domains follow at residues 182–283 (SDEY…KLVE) and 294–392 (IDQT…QVIE).

Its subcellular location is the periplasm. The catalysed reaction is [protein]-peptidylproline (omega=180) = [protein]-peptidylproline (omega=0). Chaperone involved in the correct folding and assembly of outer membrane proteins. Recognizes specific patterns of aromatic residues and the orientation of their side chains, which are found more frequently in integral outer membrane proteins. May act in both early periplasmic and late outer membrane-associated steps of protein maturation. The protein is Chaperone SurA of Nitrosospira multiformis (strain ATCC 25196 / NCIMB 11849 / C 71).